The sequence spans 88 residues: HssA/B-like protein 11 (88 aa).

The protein belongs to the hssA/B family.

In Dictyostelium discoideum (Social amoeba), this protein is HssA/B-like protein 11 (hssl11).